The primary structure comprises 243 residues: Exosome complex component Rrp41 (243 aa).

This sequence belongs to the RNase PH family. Rrp41 subfamily. Component of the archaeal exosome complex. Forms a hexameric ring-like arrangement composed of 3 Rrp41-Rrp42 heterodimers. The hexameric ring associates with a trimer of Rrp4 and/or Csl4 subunits.

It localises to the cytoplasm. Functionally, catalytic component of the exosome, which is a complex involved in RNA degradation. Has 3'-&gt;5' exoribonuclease activity. Can also synthesize heteromeric RNA-tails. The sequence is that of Exosome complex component Rrp41 from Sulfurisphaera tokodaii (strain DSM 16993 / JCM 10545 / NBRC 100140 / 7) (Sulfolobus tokodaii).